The following is an 872-amino-acid chain: Valine--tRNA ligase (872 aa).

The short motif at 46 to 56 (PNVTGKLHIGH) is the 'HIGH' region element. The 'KMSKS' region signature appears at 523-527 (KMSKS). Lysine 526 provides a ligand contact to ATP. Residues 796–872 (IEIANDSFIN…KDKLKELTND (77 aa)) are a coiled coil.

This sequence belongs to the class-I aminoacyl-tRNA synthetase family. ValS type 1 subfamily. As to quaternary structure, monomer.

It is found in the cytoplasm. The catalysed reaction is tRNA(Val) + L-valine + ATP = L-valyl-tRNA(Val) + AMP + diphosphate. Its function is as follows. Catalyzes the attachment of valine to tRNA(Val). As ValRS can inadvertently accommodate and process structurally similar amino acids such as threonine, to avoid such errors, it has a 'posttransfer' editing activity that hydrolyzes mischarged Thr-tRNA(Val) in a tRNA-dependent manner. In Mycoplasma mycoides subsp. mycoides SC (strain CCUG 32753 / NCTC 10114 / PG1), this protein is Valine--tRNA ligase.